A 300-amino-acid chain; its full sequence is Ribosomal protein bS6--L-glutamate ligase (300 aa).

The ATP-grasp domain occupies 104–287; that stretch reads MQLLARQGID…IAGKMIRWIE (184 aa). ATP is bound by residues Lys-141, 178-179, Asp-187, and 211-213; these read EY and RSN. Residues Asp-248, Glu-260, and Asn-262 each contribute to the Mg(2+) site. Residues Asp-248, Glu-260, and Asn-262 each coordinate Mn(2+).

It belongs to the RimK family. It depends on Mg(2+) as a cofactor. Mn(2+) is required as a cofactor.

An L-glutamate ligase that catalyzes the ATP-dependent post-translational addition of glutamate residues to the C-terminus of ribosomal protein bS6 (RpsF). Is also able to catalyze the synthesis of poly-alpha-glutamate in vitro, via ATP hydrolysis from unprotected glutamate as substrate. The number of glutamate residues added to either RpsF or to poly-alpha-glutamate changes with pH. This chain is Ribosomal protein bS6--L-glutamate ligase, found in Shigella boydii serotype 4 (strain Sb227).